Consider the following 131-residue polypeptide: Ribonuclease P protein component (131 aa).

It belongs to the RnpA family. Consists of a catalytic RNA component (M1 or rnpB) and a protein subunit.

The enzyme catalyses Endonucleolytic cleavage of RNA, removing 5'-extranucleotides from tRNA precursor.. In terms of biological role, RNaseP catalyzes the removal of the 5'-leader sequence from pre-tRNA to produce the mature 5'-terminus. It can also cleave other RNA substrates such as 4.5S RNA. The protein component plays an auxiliary but essential role in vivo by binding to the 5'-leader sequence and broadening the substrate specificity of the ribozyme. The polypeptide is Ribonuclease P protein component (Cyanothece sp. (strain PCC 7425 / ATCC 29141)).